We begin with the raw amino-acid sequence, 131 residues long: MVTLFTSPSCTSCRKAKAWLQEHDIPYTERNIFSEHLTIDEIKQILKMTEDGTDEIISTRSKTYQKLNVDIDSLPLQDLYAIIQDNPGLLRRPIILDEKRLQVGYNEDEIRRFLPRKVRTFQLQEAQRLVD.

Cys-10 and Cys-13 are joined by a disulfide.

The protein belongs to the ArsC family. Spx subfamily. Interacts with the C-terminal domain of the alpha subunit of the RNAP.

The protein localises to the cytoplasm. Functionally, global transcriptional regulator that plays a key role in stress response and exerts either positive or negative regulation of genes. Acts by interacting with the C-terminal domain of the alpha subunit of the RNA polymerase (RNAP). This interaction can enhance binding of RNAP to the promoter region of target genes and stimulate their transcription, or block interaction of RNAP with activator. The protein is Global transcriptional regulator Spx of Staphylococcus haemolyticus (strain JCSC1435).